A 593-amino-acid polypeptide reads, in one-letter code: FAD-binding monooxygenase acrE (593 aa).

FAD contacts are provided by residues 61–64 (TWRF), 73–74 (DS), and Y79. Position 71–73 (71–73 (RVD)) interacts with NADP(+). NADP(+) contacts are provided by residues 200–206 (TGASGVQ) and 223–224 (RS).

Belongs to the FAD-binding monooxygenase family. It depends on FAD as a cofactor.

Its pathway is secondary metabolite biosynthesis. In terms of biological role, FAD-binding monooxygenase; part of the cluster that mediates the biosynthesis of acurin A, a highly reduced polyketide coupled to a serine via a peptide bond. The activities of the highly reducing polyketide synthase acrA and the nonribosomal peptide synthetase acrB are collectively responsible for the synthesis of the acurin A core structure with a heptaketide backbone produced by acrA covalently fused to a L-serine by acrB. After the formation of the PK-NRP hybrid product, it is detached from acrB by reductive release to set up the formation of the lactam ring by aldol condensation. The hydrolyase acrC then catalyzes water loss to generate a double bond in the ring. This double bond is probably reduced, which is followed by three oxidations at C-22 to generate the carboxylic acid moiety, involving probably the FAD-binding monooxygenase acrE and the cytochrome P450 monooxygenases acrD and acrF. Finally, a last methylation step performed by the O-methyltransferase acrG leads to the production of acurin A. This is FAD-binding monooxygenase acrE from Aspergillus aculeatus (strain ATCC 16872 / CBS 172.66 / WB 5094).